The sequence spans 484 residues: Diaminopimelate decarboxylase 1, chloroplastic (484 aa).

A compositionally biased stretch (polar residues) spans 1–28 (MAAATQFLSQPSSLNPHQLKNQTSQRSR). The segment at 1–30 (MAAATQFLSQPSSLNPHQLKNQTSQRSRSI) is disordered. The N-terminal 49 residues, 1-49 (MAAATQFLSQPSSLNPHQLKNQTSQRSRSIPVLSLKSTLKPLKRLSVKA), are a transit peptide targeting the chloroplast. Ala-50 bears the N-acetylalanine mark. Lys-125 carries the post-translational modification N6-(pyridoxal phosphate)lysine. Residues Gly-304 and 340–343 (EPGR) each bind pyridoxal 5'-phosphate. 3 residues coordinate substrate: Arg-343, Arg-379, and Tyr-383. Cys-411 serves as the catalytic Proton donor. 2 residues coordinate substrate: Glu-412 and Tyr-440. Tyr-440 lines the pyridoxal 5'-phosphate pocket.

This sequence belongs to the Orn/Lys/Arg decarboxylase class-II family. LysA subfamily. As to quaternary structure, homodimer. Requires pyridoxal 5'-phosphate as cofactor.

The protein localises to the plastid. Its subcellular location is the chloroplast. The enzyme catalyses meso-2,6-diaminopimelate + H(+) = L-lysine + CO2. Its pathway is amino-acid biosynthesis; L-lysine biosynthesis via DAP pathway; L-lysine from DL-2,6-diaminopimelate: step 1/1. Its function is as follows. Specifically catalyzes the decarboxylation of meso-diaminopimelate (meso-DAP) to L-lysine. This chain is Diaminopimelate decarboxylase 1, chloroplastic (LYSA1), found in Arabidopsis thaliana (Mouse-ear cress).